The following is a 441-amino-acid chain: DNA double-strand break repair protein Mre11 (441 aa).

Mn(2+) contacts are provided by Asp-9, His-11, Asp-50, and Asn-85. His-86 (proton donor) is an active-site residue. Positions 150, 181, and 183 each coordinate Mn(2+). The segment at Glu-360–Ala-441 is disordered. Acidic residues-rich tracts occupy residues Ala-379 to Ala-403 and Thr-411 to Thr-425.

Belongs to the MRE11/RAD32 family. As to quaternary structure, homodimer. Forms a heterotetramer composed of two Mre11 subunits and two Rad50 subunits. It depends on Mn(2+) as a cofactor.

With respect to regulation, nuclease activity is regulated by Rad50. Functionally, part of the Rad50/Mre11 complex, which is involved in the early steps of DNA double-strand break (DSB) repair. Mre11 binds to DSB ends and has both double-stranded 3'-5' exonuclease activity and single-stranded endonuclease activity. In polyploid organisms, the Rad50/Mre11 complex appears to restrain the repair of double-strand breaks by homologous recombination, allowing another pathway to act as the primary mode of repair. The protein is DNA double-strand break repair protein Mre11 of Haloferax volcanii (strain ATCC 29605 / DSM 3757 / JCM 8879 / NBRC 14742 / NCIMB 2012 / VKM B-1768 / DS2) (Halobacterium volcanii).